Here is a 564-residue protein sequence, read N- to C-terminus: Efflux pump DEP3 (564 aa).

The segment covering 1 to 12 (MVYSSTSSSQNR) has biased composition (polar residues). Residues 1–48 (MVYSSTSSSQNRPDGEKHVEAVGSSTRIPSDELVDRGGGDTTTGKQSP) are disordered. A compositionally biased stretch (basic and acidic residues) spans 29 to 38 (PSDELVDRGG). 14 consecutive transmembrane segments (helical) span residues 65-85 (STTLLFALDNTIVANIQPAII), 91-111 (LELLSWIGTGFALGTMFILLW), 122-142 (WVYIFNIFLFEAGSALCGAAP), 152-172 (VIAGVGGSGMYSGTLTYVSVL), 185-205 (STVVWGIGSVLGPVVGGAFAA), 212-232 (WGFYVNLPIGAAFAPVYFLLF), 255-275 (AVIFLAGSACLTVVLTFGGVV), 281-301 (GTVIALWTVTGILLVAFIVLL), 332-352 (FLSSGIILAMTYYVPLYFQFI), 362-382 (VRLLPLIMFMVVASMVNGFLM), 386-406 (GLIPIWYIGGSSLALIGTALM), 423-443 (ILIGAGTGSYIVAGFAIVQSL), 452-472 (AVGAMTIFQDLGMVLFLAISG), and 528-548 (TIWAFFLAAAALSVVCSFPLL).

The protein belongs to the major facilitator superfamily. TCR/Tet family.

The protein localises to the cell membrane. Efflux pump; part of the gene cluster that mediates the biosynthesis of depudecin, a highly oxidized eleven-carbon linear polyketide that acts as a histone deacetylase (HDAC) inhibitor and makes a small contribution to pathogenesis. Is presumed either to be responsible for exporting depudecin, to provide self-protection, or both. The chain is Efflux pump DEP3 from Alternaria brassicicola (Dark leaf spot agent).